The chain runs to 261 residues: UPF0246 protein Daci_5283 (261 aa).

The protein belongs to the UPF0246 family.

The chain is UPF0246 protein Daci_5283 from Delftia acidovorans (strain DSM 14801 / SPH-1).